Consider the following 623-residue polypeptide: Glutathione import ATP-binding protein GsiA (623 aa).

2 consecutive ABC transporter domains span residues 15–269 (VSGL…QTLL) and 325–564 (LRSG…RKLM). ATP is bound by residues 49-56 (GESGSGKS) and 357-364 (GESGSGKS).

It belongs to the ABC transporter superfamily. Glutathione importer (TC 3.A.1.5.11) family. The complex is composed of two ATP-binding proteins (GsiA), two transmembrane proteins (GsiC and GsiD) and a solute-binding protein (GsiB).

Its subcellular location is the cell inner membrane. The enzyme catalyses glutathione(out) + ATP + H2O = glutathione(in) + ADP + phosphate + H(+). Its function is as follows. Part of the ABC transporter complex GsiABCD involved in glutathione import. Responsible for energy coupling to the transport system. This chain is Glutathione import ATP-binding protein GsiA, found in Salmonella paratyphi A (strain ATCC 9150 / SARB42).